The primary structure comprises 316 residues: Cuticle collagen 12 (316 aa).

A signal peptide spans 1–36 (MTEDPKQIAQETESLRKVAFFGIAVSTIATLTAIIA). 2 stretches are compositionally biased toward low complexity: residues 127–157 (SGAA…PGQD) and 183–204 (APGQ…GAAL). The segment at 127-316 (SGAAGPAGSP…CPPPRTAPGY (190 aa)) is disordered. Triple-helical region regions lie at residues 128 to 157 (GAAG…PGQD), 176 to 202 (GPPG…SGGA), 206 to 235 (GPPG…PGQV), 240 to 266 (GTPG…AGSS), and 269 to 304 (GGPG…EGAC). The segment covering 205–217 (PGPPGPAGPPGPA) has biased composition (pro residues). Low complexity predominate over residues 219-234 (QPGSNGNAGAPGAPGQ). Residues 241–251 (TPGPAGPPGSP) show a composition bias toward pro residues. Low complexity-rich tracts occupy residues 256–266 (APGQPGQAGSS) and 276–295 (DAGA…PGQD). Over residues 307–316 (CPPPRTAPGY) the composition is skewed to pro residues.

It belongs to the cuticular collagen family. As to quaternary structure, collagen polypeptide chains are complexed within the cuticle by disulfide bonds and other types of covalent cross-links.

In terms of biological role, nematode cuticles are composed largely of collagen-like proteins. The cuticle functions both as an exoskeleton and as a barrier to protect the worm from its environment. The polypeptide is Cuticle collagen 12 (col-12) (Caenorhabditis elegans).